We begin with the raw amino-acid sequence, 143 residues long: Large ribosomal subunit protein uL11 (143 aa).

The protein belongs to the universal ribosomal protein uL11 family. In terms of assembly, part of the ribosomal stalk of the 50S ribosomal subunit. Interacts with L10 and the large rRNA to form the base of the stalk. L10 forms an elongated spine to which L12 dimers bind in a sequential fashion forming a multimeric L10(L12)X complex. Post-translationally, one or more lysine residues are methylated.

Its function is as follows. Forms part of the ribosomal stalk which helps the ribosome interact with GTP-bound translation factors. The sequence is that of Large ribosomal subunit protein uL11 from Janthinobacterium sp. (strain Marseille) (Minibacterium massiliensis).